Reading from the N-terminus, the 38-residue chain is Large ribosomal subunit protein bL36 (38 aa).

Belongs to the bacterial ribosomal protein bL36 family.

This is Large ribosomal subunit protein bL36 from Pelodictyon phaeoclathratiforme (strain DSM 5477 / BU-1).